Consider the following 92-residue polypeptide: C-C motif chemokine 4 (92 aa).

A signal peptide spans 1–23 (MKLGVTVLSVALLVAALCPPALS). 2 disulfides stabilise this stretch: Cys-34–Cys-58 and Cys-35–Cys-74.

Belongs to the intercrine beta (chemokine CC) family. As to quaternary structure, homodimer.

The protein localises to the secreted. Monokine with inflammatory and chemokinetic properties. This Oryctolagus cuniculus (Rabbit) protein is C-C motif chemokine 4 (CCL4).